Reading from the N-terminus, the 293-residue chain is uncharacterized protein (293 aa).

Residues 1–22 (MTFNEGVQIDTSTTSTSGSGGG) are disordered. The chain crosses the membrane as a helical span at residues 25 to 45 (LAIGGGLGGLLVVVVAMLLGV). The interval 243–265 (GDDRIQQQTTGRTNPETWTHGSA) is disordered. The span at 248–265 (QQQTTGRTNPETWTHGSA) shows a compositional bias: polar residues.

It is found in the membrane. This is an uncharacterized protein from Mycobacterium tuberculosis (strain CDC 1551 / Oshkosh).